The primary structure comprises 536 residues: 2,3-bisphosphoglycerate-independent phosphoglycerate mutase (536 aa).

Residues Asp-19 and Ser-69 each coordinate Mn(2+). Ser-69 acts as the Phosphoserine intermediate in catalysis. Substrate-binding positions include His-130, Arg-160–Asp-161, Arg-192, Arg-198, Arg-262–Arg-265, and Lys-335. Residues Asp-402, His-406, Asp-443, His-444, and His-461 each contribute to the Mn(2+) site.

Belongs to the BPG-independent phosphoglycerate mutase family. As to quaternary structure, monomer. Mn(2+) is required as a cofactor.

The catalysed reaction is (2R)-2-phosphoglycerate = (2R)-3-phosphoglycerate. The protein operates within carbohydrate degradation; glycolysis; pyruvate from D-glyceraldehyde 3-phosphate: step 3/5. Functionally, catalyzes the interconversion of 2-phosphoglycerate and 3-phosphoglycerate. This chain is 2,3-bisphosphoglycerate-independent phosphoglycerate mutase, found in Gloeobacter violaceus (strain ATCC 29082 / PCC 7421).